The sequence spans 219 residues: MPFIENQTTTAEPIVPVDVKGKDAFHKLVDDLSAVLGPSSGLDSDDVDPMDIQKLMEGYVSNHEEWQRYALADESRAYTRNLVDEGNGKSNLLVLVWNPGKSSPIHDHANAHCVMKILHGSLKEHRYDWPEQDKINNGEACPLTVTKETILRENEVAYMSDKLGLHKISNPDPNDFAISLHLYTPPNAAHFGCSLFDEKTGKSHHIKQCTFFSNRGLKL.

Fe cation-binding residues include H106, H108, and H166. Residues 113 to 183 (CVMKILHGSL…NDFAISLHLY (71 aa)) constitute a cross-link (3'-(S-cysteinyl)-tyrosine (Cys-Tyr)).

The protein belongs to the cysteine dioxygenase family. Fe cation serves as cofactor. Post-translationally, the thioether cross-link between Cys-113 and Tyr-183 plays a structural role through stabilizing the Fe(2+) ion, and prevents the production of highly damaging free hydroxyl radicals by holding the oxygen radical via hydroxyl hydrogen.

The catalysed reaction is L-cysteine + O2 = 3-sulfino-L-alanine + H(+). Functionally, cysteine dioxygenase involved in sulfite formation from cysteine. Required for keratin degradation and plays an important role in filamentous growth and virulence. In Arthroderma benhamiae (Trichophyton mentagrophytes), this protein is Cysteine dioxygenase.